Here is a 208-residue protein sequence, read N- to C-terminus: MNILHNFVVFEGIDGTGTSTQLRALERHFQARKDMVFTQEPTGGEIGTLIRDVLQKRVIMSSKALGLLFAADRHEHLEGAGGINDCLAEGKIVLCDRYVFSSLVYQGMAVSGSFAYELNKEFPLPEVVFYFDAPIEVCVERITARGLQTELYEYTSFQEKARKGYETIFRKCRHLYPAMKVIEIDAREEIEVVHERILHHLREYRRLK.

Residues 12 to 19 (GIDGTGTS) form a defective ATP-binding region.

Belongs to the thymidylate kinase family.

It carries out the reaction dTMP + ATP = dTDP + ADP. The chain is Putative thymidylate kinase (tmk) from Treponema pallidum (strain Nichols).